Consider the following 142-residue polypeptide: Large ribosomal subunit protein uL22c (142 aa).

It belongs to the universal ribosomal protein uL22 family. Part of the 50S ribosomal subunit.

The protein resides in the plastid. The protein localises to the chloroplast. Functionally, this protein binds specifically to 23S rRNA. Its function is as follows. The globular domain of the protein is located near the polypeptide exit tunnel on the outside of the subunit, while an extended beta-hairpin is found that lines the wall of the exit tunnel in the center of the 70S ribosome. The chain is Large ribosomal subunit protein uL22c (rpl22) from Oenothera parviflora (Small-flowered evening primrose).